Here is a 73-residue protein sequence, read N- to C-terminus: Conotoxin im23b (73 aa).

The first 22 residues, 1–22, serve as a signal peptide directing secretion; that stretch reads MIMRMTLTLFVLVVMTAASASG. Positions 23 to 28 are excised as a propeptide; sequence DALTEA. Cystine bridges form between C34/C41, C45/C55, and C56/C71.

It belongs to the conotoxin K superfamily. As to expression, expressed by the venom duct.

The protein resides in the secreted. Neurotoxin that induces excitatory symptoms in mice following intracranial administration. No symptoms are observed after intraperitoneal and intravenous (tail vein) injections. The protein is Conotoxin im23b of Conus imperialis (Imperial cone).